The chain runs to 590 residues: O-fucosyltransferase 2 (590 aa).

Over residues 1-16 the composition is skewed to basic and acidic residues; sequence MGQERPNDEERPESRD. The tract at residues 1-26 is disordered; the sequence is MGQERPNDEERPESRDLGVYGCSPPH. Residues 67–87 traverse the membrane as a helical; Signal-anchor for type II membrane protein segment; the sequence is TAIGVMAILGFFCLVNWFMLS. Asn-125 carries an N-linked (GlcNAc...) asparagine glycan. Residue 365–367 coordinates substrate; the sequence is HLR. Residues Asn-485 and Asn-546 are each glycosylated (N-linked (GlcNAc...) asparagine).

It belongs to the glycosyltransferase GT106 family.

It is found in the membrane. It participates in glycan metabolism. The polypeptide is O-fucosyltransferase 2 (Arabidopsis thaliana (Mouse-ear cress)).